Here is a 432-residue protein sequence, read N- to C-terminus: Glutamyl-tRNA reductase (432 aa).

Substrate contacts are provided by residues 50-53, serine 110, 115-117, and glutamine 121; these read TCNR and ETQ. The Nucleophile role is filled by cysteine 51. Residue 190-195 coordinates NADP(+); it reads GVGEMS.

This sequence belongs to the glutamyl-tRNA reductase family. Homodimer.

It catalyses the reaction (S)-4-amino-5-oxopentanoate + tRNA(Glu) + NADP(+) = L-glutamyl-tRNA(Glu) + NADPH + H(+). Its pathway is porphyrin-containing compound metabolism; protoporphyrin-IX biosynthesis; 5-aminolevulinate from L-glutamyl-tRNA(Glu): step 1/2. Functionally, catalyzes the NADPH-dependent reduction of glutamyl-tRNA(Glu) to glutamate 1-semialdehyde (GSA). The polypeptide is Glutamyl-tRNA reductase (Sulfurimonas denitrificans (strain ATCC 33889 / DSM 1251) (Thiomicrospira denitrificans (strain ATCC 33889 / DSM 1251))).